Here is a 179-residue protein sequence, read N- to C-terminus: Large ribosomal subunit protein uL6 (179 aa).

The protein belongs to the universal ribosomal protein uL6 family. In terms of assembly, part of the 50S ribosomal subunit.

In terms of biological role, this protein binds to the 23S rRNA, and is important in its secondary structure. It is located near the subunit interface in the base of the L7/L12 stalk, and near the tRNA binding site of the peptidyltransferase center. This Bacillus subtilis (strain 168) protein is Large ribosomal subunit protein uL6.